Consider the following 182-residue polypeptide: Ribosome-recycling factor (182 aa).

It belongs to the RRF family.

It localises to the cytoplasm. Responsible for the release of ribosomes from messenger RNA at the termination of protein biosynthesis. May increase the efficiency of translation by recycling ribosomes from one round of translation to another. The protein is Ribosome-recycling factor of Thermosynechococcus vestitus (strain NIES-2133 / IAM M-273 / BP-1).